A 526-amino-acid polypeptide reads, in one-letter code: Phosphoenolpyruvate carboxylase (526 aa).

It belongs to the PEPCase type 2 family. In terms of assembly, homotetramer. Requires Mg(2+) as cofactor.

The enzyme catalyses oxaloacetate + phosphate = phosphoenolpyruvate + hydrogencarbonate. Functionally, catalyzes the irreversible beta-carboxylation of phosphoenolpyruvate (PEP) to form oxaloacetate (OAA), a four-carbon dicarboxylic acid source for the tricarboxylic acid cycle. The polypeptide is Phosphoenolpyruvate carboxylase (Methanosarcina barkeri (strain Fusaro / DSM 804)).